The primary structure comprises 150 residues: Non-structural glycoprotein 4 (150 aa).

Topologically, residues 1–15 (MDFINQTLFSKYTES) are lumenal. Asn-5 carries an N-linked (GlcNAc...) asparagine; by host glycan. A helical; Signal-anchor for type III membrane protein membrane pass occupies residues 16–44 (NVDTIPYLLGLILALTNGSRILRFINSFI). At 45-150 (IICKHIVTTS…KSGLETEVCL (106 aa)) the chain is on the cytoplasmic side.

This sequence belongs to the rotavirus NSP4 family. As to quaternary structure, homotetramer. Interacts with the immature particle in the viroplasm. Interacts with host CAV1, early and late in infection. Interacts with host integrin ITGA1/ITGB1 heterodimer. Interacts with host integrin ITGA2/ITGB1 heterodimer. Interaction with microtubules blocks trafficking to the Golgi apparatus. Post-translationally, the N-glycosyl content is primarily Man(9)GlcNAc, with a small amount of Man(8)GlcNAc.

It localises to the host rough endoplasmic reticulum membrane. Its subcellular location is the host membrane. It is found in the host caveola. The protein resides in the secreted. Its function is as follows. Plays an essential role in the virus replication cycle by acting as a viroporin. Creates a pore in the host endoplasmic reticulum and as a consequence releases Ca(2+) in the cytoplasm of infected cell. In turn, high levels of cytoplasmic calcium trigger membrane trafficking and transport of viral ER-associated proteins to viroplasms, sites of viral genome replication and immature particle assembly. Functionally, the secreted form acts as an enterotoxin that causes phospholipase C-dependent elevation of the intracellular calcium concentration in host intestinal mucosa cells. Increased concentration of intracellular calcium disrupts the cytoskeleton and the tight junctions, raising the paracellular permeability. Potentiates chloride ion secretion through a calcium ion-dependent signaling pathway, inducing age-dependent diarrhea. To perform this enterotoxigenic role in vivo, NSP4 is released from infected enterocytes in a soluble form capable of diffusing within the intestinal lumen and interacting with host plasma membrane receptors on neighboring epithelial cells such as integrins ITGA1/ITGB1 and ITGA2/ITGB1. The protein is Non-structural glycoprotein 4 of Homo sapiens (Human).